The primary structure comprises 227 residues: Putative ankyrin repeat protein RF_0314 (227 aa).

3 ANK repeats span residues 94–126 (NGCT…DPNI), 130–164 (DGNT…DIEL), and 168–199 (LGWT…DNDF).

This chain is Putative ankyrin repeat protein RF_0314, found in Rickettsia felis (strain ATCC VR-1525 / URRWXCal2) (Rickettsia azadi).